Here is a 425-residue protein sequence, read N- to C-terminus: Inositol hexakisphosphate kinase 2 (425 aa).

ATP is bound by residues 206 to 208 (ENL) and Asp-219. Residues 215 to 223 (PCVLDLKMG), Lys-221, and 235 to 242 (KAANQIRK) contribute to the substrate site. An ATP-binding site is contributed by Asp-382. His-385 contributes to the substrate binding site.

It belongs to the inositol phosphokinase (IPK) family. In terms of tissue distribution, highly expressed in small intestine.

Its subcellular location is the nucleus. The enzyme catalyses 1D-myo-inositol hexakisphosphate + ATP = 5-diphospho-1D-myo-inositol 1,2,3,4,6-pentakisphosphate + ADP. The protein operates within phospholipid metabolism; phosphatidylinositol metabolism. In terms of biological role, converts inositol hexakisphosphate (InsP6) to diphosphoinositol pentakisphosphate (InsP7/PP-InsP5). The chain is Inositol hexakisphosphate kinase 2 (Ip6k2) from Rattus norvegicus (Rat).